The chain runs to 394 residues: Elongation factor Tu (394 aa).

The tr-type G domain maps to 10 to 204 (KPHLNVGTIG…ALDTYIPLPE (195 aa)). Residues 19 to 26 (GHVDHGKT) are G1. 19 to 26 (GHVDHGKT) contributes to the GTP binding site. T26 contributes to the Mg(2+) binding site. Positions 60 to 64 (GITIN) are G2. A G3 region spans residues 81 to 84 (DCPG). Residues 81–85 (DCPGH) and 136–139 (NKCD) each bind GTP. A G4 region spans residues 136–139 (NKCD). The tract at residues 174 to 176 (SAL) is G5.

Belongs to the TRAFAC class translation factor GTPase superfamily. Classic translation factor GTPase family. EF-Tu/EF-1A subfamily. Monomer.

It localises to the cytoplasm. The catalysed reaction is GTP + H2O = GDP + phosphate + H(+). GTP hydrolase that promotes the GTP-dependent binding of aminoacyl-tRNA to the A-site of ribosomes during protein biosynthesis. In Psychromonas ingrahamii (strain DSM 17664 / CCUG 51855 / 37), this protein is Elongation factor Tu.